Here is a 971-residue protein sequence, read N- to C-terminus: ATP-dependent helicase NAM7 (971 aa).

Positions 1–22 (MVGSGSHTPYDISNSPSDVNVQ) are disordered. In terms of domain architecture, Upf1 CH-rich spans 54–208 (SPSASDNSCA…SKLEAKWRSN (155 aa)). A Phosphoserine modification is found at serine 56. Positions 62, 65, 76, 79, 84, 94, 98, 104, 122, 125, 148, and 152 each coordinate Zn(2+). The C3H stretch occupies residues 62–94 (CAYCGIDSAKCVIKCNSCKKWFCNTKNGTSSSH). The tract at residues 76-104 (CNSCKKWFCNTKNGTSSSHIVNHLVLSHH) is CC/SHH/C. Residues 122–152 (CYNCGRKNVFLLGFVSAKSEAVVVLLCRIPC) form a C4 region. ATP contacts are provided by residues glutamine 413, 433–437 (GTGKT), glutamine 601, tyrosine 638, and glutamate 769. Phosphoserine is present on serine 869.

It belongs to the DNA2/NAM7 helicase family.

It localises to the cytoplasm. It catalyses the reaction ATP + H2O = ADP + phosphate + H(+). Functionally, RNA-dependent helicase required for nonsense-mediated decay (NMD) of aberrant mRNAs containing premature stop codons and modulates the expression level of normal mRNAs. Also capable of unwinding double-stranded DNA and translocating on single-stranded DNA. This is ATP-dependent helicase NAM7 (NAM7) from Saccharomyces cerevisiae (strain ATCC 204508 / S288c) (Baker's yeast).